A 1087-amino-acid chain; its full sequence is MSYAELQVTTHFSFLRGASSAQELFETAKALGIEALGVVDRNSLAGIVRALEASRATGLRLVIGCRLDLADGMSVLVYPTDRAAYSRLTRLITLGKSRGGKNNCLLHWDDVVAYTDGMIGILVPDLPDDLCGIQLRKMAELFGDRAYVSLCLRRRQNDQLRLHEISNLATRFKVRTVVTNDVLFHEPGRRQLQDIVTCIRTRTTIDEVGFERERHADRYLKPPEEMERLFPRYRQALARTMEIVRRCTFSLEELTYQYPEEAIVPGKDAQASLEHYVWQCVPDRYPEGLPPDVLKVVRHELDLIRTMKYAPYFLTVFSIVRYARSQGILCQGRGSAANSAVCYILGITSIDPSTNDLLFERFVSQERDEPPDIDVDFEHERREEVIQWIYRTYTREKAALCATVTRYRARGAIRDVGKALGLPEDVIKALSSGMWSWSEEVCDRNVRELNLNPDDRRLVLTLKLAQQLMGAPRHLGQHPGGFVLTHDRLDDLVPIEPATMKDRQIIEWDKDDVEALKFMKVDILALGMLTCMAKAFDLIREHKDRDLDLSKIEQEDSVTYAMIRKADTLGTFQIESRAQMAMLPRLKPRTFYDLVVQVAIVRPGPIQGDMVHPYLRRREGKEAVEYPTPELEAVLGKTLGVPLFQESAMRVAMVCAGFTGGEADQLRKSMATFKFTGGVSQFKDKLVSGMVRNGYAPEFAEKTFSQLEGFGSYGFPESHAASFALIAYASSYIKCHYPEAFCAALINSQPMGFYAPAQIVGDARAHGVEVRPVCINRSRWDCTLERIGNSDRHAVRLGFRQVKGLAVADAARVVAARMNNAFVSVDDMWRRSGVPSEALVQLAKADAFLPSLKLERRDALWAIKALRDEPLPLFAAAAEREMAAIAEQQEPGVALRQMTDGHNVIEDYSHTGLTLRQHPIAFLRKDLSVRNIITCAEAMNSRDGRWVYTAGLVLVRQKPGSAKGVMFITIEDETGPANLVVWPTLFEKRRRAVLGSSMMAINGRIQREGEVVHLVAQQLFDLSGDLTGLADRDEEFKLPAGRGDEFAHGSPGSSDTRDKSKPVVAPRDIFTPDLHIDTLKIKSRNFH.

The interval 1040–1064 is disordered; it reads AGRGDEFAHGSPGSSDTRDKSKPVV.

It belongs to the DNA polymerase type-C family. DnaE2 subfamily.

The protein localises to the cytoplasm. The catalysed reaction is DNA(n) + a 2'-deoxyribonucleoside 5'-triphosphate = DNA(n+1) + diphosphate. Functionally, DNA polymerase involved in damage-induced mutagenesis and translesion synthesis (TLS). It is not the major replicative DNA polymerase. The protein is Error-prone DNA polymerase 3 of Agrobacterium fabrum (strain C58 / ATCC 33970) (Agrobacterium tumefaciens (strain C58)).